The chain runs to 482 residues: G patch domain-containing protein 2-like (482 aa).

A phosphoserine mark is found at Ser31, Ser86, and Ser88. Thr91 carries the phosphothreonine modification. Disordered regions lie at residues 195–222 (SQPG…SECD) and 408–482 (KRKR…TNGC). The span at 198-215 (GRKERMECEAEEQKHGSD) shows a compositional bias: basic and acidic residues. Residues 414 to 427 (VASASFSSPSPVHP) are compositionally biased toward low complexity. The span at 468-482 (EKNSGCSSSPGTNGC) shows a compositional bias: polar residues.

The polypeptide is G patch domain-containing protein 2-like (Gpatch2l) (Mus musculus (Mouse)).